The sequence spans 162 residues: NADH-quinone oxidoreductase subunit I 2 (162 aa).

4Fe-4S ferredoxin-type domains follow at residues 52 to 82 and 93 to 122; these read LRRY…IEAG and VRYD…EGPN. [4Fe-4S] cluster-binding residues include C62, C65, C68, C72, C102, C105, C108, and C112.

Belongs to the complex I 23 kDa subunit family. As to quaternary structure, NDH-1 is composed of 14 different subunits. Subunits NuoA, H, J, K, L, M, N constitute the membrane sector of the complex. [4Fe-4S] cluster serves as cofactor.

Its subcellular location is the cell inner membrane. The enzyme catalyses a quinone + NADH + 5 H(+)(in) = a quinol + NAD(+) + 4 H(+)(out). In terms of biological role, NDH-1 shuttles electrons from NADH, via FMN and iron-sulfur (Fe-S) centers, to quinones in the respiratory chain. The immediate electron acceptor for the enzyme in this species is believed to be ubiquinone. Couples the redox reaction to proton translocation (for every two electrons transferred, four hydrogen ions are translocated across the cytoplasmic membrane), and thus conserves the redox energy in a proton gradient. This is NADH-quinone oxidoreductase subunit I 2 from Rhodopseudomonas palustris (strain HaA2).